Reading from the N-terminus, the 259-residue chain is Sugar fermentation stimulation protein homolog (259 aa).

Belongs to the SfsA family.

The protein is Sugar fermentation stimulation protein homolog of Prochlorococcus marinus (strain MIT 9303).